The primary structure comprises 306 residues: Protein FAM228A (306 aa).

Positions 237 to 277 (HASKLSQQNKGAEKKGLALGTRAQRPRSWAAADSPQGTPLV) are disordered. Serine 270 bears the Phosphoserine mark.

This sequence belongs to the FAM228 family.

In Rattus norvegicus (Rat), this protein is Protein FAM228A (Fam228a).